The sequence spans 163 residues: Choriogonadotropin subunit beta (163 aa).

A signal peptide spans 1–20; it reads MEMLQGLLLCLLLSTGGAWA. 6 disulfide bridges follow: Cys-29/Cys-76, Cys-43/Cys-91, Cys-46/Cys-129, Cys-54/Cys-107, Cys-58/Cys-109, and Cys-112/Cys-119. Asn-50 carries N-linked (GlcNAc...) asparagine glycosylation. A glycan (N-linked (GlcNAc...) asparagine) is linked at Asn-124. Over residues 135 to 151 the composition is skewed to polar residues; the sequence is QDSSSNVPPSNLTSPSQ. The segment at 135-163 is disordered; sequence QDSSSNVPPSNLTSPSQLLEPAVTPLVPQ. A glycan (O-linked (GalNAc...) serine) is linked at Ser-139. An N-linked (GlcNAc...) asparagine glycan is attached at Asn-145. The O-linked (GalNAc...) serine glycan is linked to Ser-150.

Belongs to the glycoprotein hormones subunit beta family. Heterodimer of a common alpha chain and a unique beta chain which confers biological specificity to thyrotropin, lutropin, follitropin and gonadotropin.

It localises to the secreted. Stimulates the ovaries to synthesize the steroids that are essential for the maintenance of pregnancy. This is Choriogonadotropin subunit beta (CGB) from Saimiri boliviensis boliviensis (Bolivian squirrel monkey).